Reading from the N-terminus, the 764-residue chain is MTIIHNLGFPRIGAQRELKRAVEAYWAGRQTAEALHETGRALRAAHWQRQADAGVAFVPVGDFAWYDHILEWTTLLGAVPARFGHPEGKPVDLDTLFRMGRGRAPSGKPAAACEMTKWFDTNYHYIVPELTPGQTFRVAREDLFEQVKEAQALGHRVKPVIPGPLTWLWLGKGDAFAQGAGDIGKLQLLDALLPVYGEVLERLAGLGVEWVQIDEPALVLDLPQAWRDAYQAVYAKLAASPVKLLLATYFDGLKDNLATALALPVAGLHVDLVRAPDQLSDVASGLRPGQVLSAGVINGRNIWRTDLDAALAMLAPVREQLQERLWLAPSCSLLHVPVDLAGETELDAELLGWLSFAVQKLDELCLLGKALGGDADPAVQQGLAAQRAALQARRQSPRIHNPAVAQRMAGQAGVSRERAPFGQRIARQQSELRLPAFPTTTIGSFPQTAEIRALRRDWKSGALTDSAYENAIRKEIEEVIRFQEKVGLDVLVHGEPERNDMVEYFGELLAGFAFTKNGWVQSYGSRCVKPPIIFGDVARPAPMTVGWSAYAQSLTDKPVKGMLTGPVTILQWSFVRDDQPREATCRQLALALRDEVVDLEAAGIRVIQIDEPAIREGLPLRRADWRAYLDWAVDCFRLSTAGVGEATQIHTHMCYSEFNDIIESIAAMDADVITIETSRSNMELLKAFEDFHYPNDIGPGVYDIHSPNVPEVDWMVELMRKAAARLPKERLWVNPDCGLKTRAWPETEAALIGMVQAARTLRAA.

Residues 16–19 and K117 each bind 5-methyltetrahydropteroyltri-L-glutamate; that span reads RELK. L-homocysteine is bound by residues 442 to 444 and E495; that span reads IGS. L-methionine contacts are provided by residues 442–444 and E495; that span reads IGS. 5-methyltetrahydropteroyltri-L-glutamate is bound by residues 526-527 and W572; that span reads RC. D610 serves as a coordination point for L-homocysteine. Residue D610 participates in L-methionine binding. E616 is a 5-methyltetrahydropteroyltri-L-glutamate binding site. 3 residues coordinate Zn(2+): H652, C654, and E676. The Proton donor role is filled by H705. C737 provides a ligand contact to Zn(2+).

This sequence belongs to the vitamin-B12 independent methionine synthase family. Zn(2+) serves as cofactor.

It catalyses the reaction 5-methyltetrahydropteroyltri-L-glutamate + L-homocysteine = tetrahydropteroyltri-L-glutamate + L-methionine. Its pathway is amino-acid biosynthesis; L-methionine biosynthesis via de novo pathway; L-methionine from L-homocysteine (MetE route): step 1/1. Functionally, catalyzes the transfer of a methyl group from 5-methyltetrahydrofolate to homocysteine resulting in methionine formation. The polypeptide is 5-methyltetrahydropteroyltriglutamate--homocysteine methyltransferase (Bordetella bronchiseptica (strain ATCC BAA-588 / NCTC 13252 / RB50) (Alcaligenes bronchisepticus)).